Reading from the N-terminus, the 296-residue chain is Aspartate carbamoyltransferase catalytic subunit (296 aa).

Arg50 and Thr51 together coordinate carbamoyl phosphate. L-aspartate is bound at residue Lys79. Carbamoyl phosphate-binding residues include Arg100, His128, and Gln131. 2 residues coordinate L-aspartate: Arg161 and Arg219. Residues Leu258 and Pro259 each contribute to the carbamoyl phosphate site.

The protein belongs to the aspartate/ornithine carbamoyltransferase superfamily. ATCase family. In terms of assembly, heterooligomer of catalytic and regulatory chains.

It carries out the reaction carbamoyl phosphate + L-aspartate = N-carbamoyl-L-aspartate + phosphate + H(+). Its pathway is pyrimidine metabolism; UMP biosynthesis via de novo pathway; (S)-dihydroorotate from bicarbonate: step 2/3. Catalyzes the condensation of carbamoyl phosphate and aspartate to form carbamoyl aspartate and inorganic phosphate, the committed step in the de novo pyrimidine nucleotide biosynthesis pathway. This chain is Aspartate carbamoyltransferase catalytic subunit, found in Korarchaeum cryptofilum (strain OPF8).